The chain runs to 104 residues: Iron-sulfur cluster assembly protein CyaY (104 aa).

Belongs to the frataxin family.

In terms of biological role, involved in iron-sulfur (Fe-S) cluster assembly. May act as a regulator of Fe-S biogenesis. This Vibrio cholerae serotype O1 (strain ATCC 39541 / Classical Ogawa 395 / O395) protein is Iron-sulfur cluster assembly protein CyaY.